The chain runs to 80 residues: Acyl carrier protein (80 aa).

The region spanning D4 to K79 is the Carrier domain. S39 bears the O-(pantetheine 4'-phosphoryl)serine mark.

It belongs to the acyl carrier protein (ACP) family. In terms of processing, 4'-phosphopantetheine is transferred from CoA to a specific serine of apo-ACP by AcpS. This modification is essential for activity because fatty acids are bound in thioester linkage to the sulfhydryl of the prosthetic group.

Its subcellular location is the cytoplasm. The protein operates within lipid metabolism; fatty acid biosynthesis. In terms of biological role, carrier of the growing fatty acid chain in fatty acid biosynthesis. The polypeptide is Acyl carrier protein (Chloroherpeton thalassium (strain ATCC 35110 / GB-78)).